We begin with the raw amino-acid sequence, 636 residues long: 1-deoxy-D-xylulose-5-phosphate synthase (636 aa).

Thiamine diphosphate-binding positions include histidine 72 and 113–115 (GHA). Residue aspartate 144 participates in Mg(2+) binding. Residues 145–146 (GS), asparagine 174, tyrosine 287, and glutamate 370 each bind thiamine diphosphate. Position 174 (asparagine 174) interacts with Mg(2+).

This sequence belongs to the transketolase family. DXPS subfamily. In terms of assembly, homodimer. The cofactor is Mg(2+). Thiamine diphosphate is required as a cofactor.

It carries out the reaction D-glyceraldehyde 3-phosphate + pyruvate + H(+) = 1-deoxy-D-xylulose 5-phosphate + CO2. Its pathway is metabolic intermediate biosynthesis; 1-deoxy-D-xylulose 5-phosphate biosynthesis; 1-deoxy-D-xylulose 5-phosphate from D-glyceraldehyde 3-phosphate and pyruvate: step 1/1. Functionally, catalyzes the acyloin condensation reaction between C atoms 2 and 3 of pyruvate and glyceraldehyde 3-phosphate to yield 1-deoxy-D-xylulose-5-phosphate (DXP). The sequence is that of 1-deoxy-D-xylulose-5-phosphate synthase from Synechococcus elongatus (strain ATCC 33912 / PCC 7942 / FACHB-805) (Anacystis nidulans R2).